Consider the following 467-residue polypeptide: MGATSMLTLLLTHPFEFRVLIQYKLWHEPKRDITQVSEHPTSGWDRPTMRRCWEFLDQTSRSFSGVIKEVEGDLARVICLFYLVLRGLDTIEDDMTLPDEKKQPILRQFHKLAVKPGWTFDECGPKEKDRQLLVEWTVVSEELNRLDACYRDIIIDIAEKMQTGMADYAHKAATTNSIYIGTVDEYNLYCHYVAGLVGEGLTRFWAASGKEAEWLGDQLELTNAMGLMLQKTNIIRDFREDAEERRFFWPREIWGRDAYGKAVGRANGFREMHELYERGNEKQALWVQSGMVVDVLGHATDSLDYLRLLTKQSIFCFCAIPQTMAMATLSLCFMNYDMFHNHIKIRRAEAASLIMRSTNPRDVAYIFRDYARKMHARALPEDPSFLRLSVACGKIEQWCERHYPSFVRLQQVSGGGIVFDPSDARTKVVEAAQARDNELAREKRLAELRDKTGKLERKLRWSQAPSS.

Belongs to the phytoene/squalene synthase family. The cofactor is Mg(2+).

The enzyme catalyses 2 (2E,6E)-farnesyl diphosphate + NADPH + H(+) = squalene + 2 diphosphate + NADP(+). It carries out the reaction 2 (2E,6E)-farnesyl diphosphate + NADH + H(+) = squalene + 2 diphosphate + NAD(+). It functions in the pathway terpene metabolism; lanosterol biosynthesis; lanosterol from farnesyl diphosphate: step 1/3. Its function is as follows. Squalene synthase; part of the third module of ergosterol biosynthesis pathway that includes the late steps of the pathway. The third module or late pathway involves the ergosterol synthesis itself through consecutive reactions that mainly occur in the endoplasmic reticulum (ER) membrane. Firstly, the squalene synthase SQS catalyzes the condensation of 2 farnesyl pyrophosphate moieties to form squalene, which is the precursor of all steroids. Secondly, the squalene epoxidase catalyzes the stereospecific oxidation of squalene to (S)-2,3-epoxysqualene, which is considered to be a rate-limiting enzyme in steroid biosynthesis. Then, the lanosterol synthase LS catalyzes the cyclization of (S)-2,3 oxidosqualene to lanosterol, a reaction that forms the sterol core. In the next steps, lanosterol is transformed to ergosterol via a complex process involving various demethylation, reduction and desaturation reactions. Lanosterol is also an intermediate in the biosynthesis of triterpenes such as ganoderic acids (GA), a group of highly oxygenated lanostane-type triterpenoids which are well recognized as a main group of unique bioactive compounds in the medicinal mushroom Ganoderma lucidum. The polypeptide is Squalene synthase (Ganoderma lucidum (Ling zhi medicinal fungus)).